Here is a 549-residue protein sequence, read N- to C-terminus: Oxygen-dependent choline dehydrogenase (549 aa).

An FAD-binding site is contributed by 4–33; the sequence is DFVIIGSGSAGSAMAYRLSEDGRYSVIVIE. Histidine 465 acts as the Proton acceptor in catalysis.

This sequence belongs to the GMC oxidoreductase family. The cofactor is FAD.

The catalysed reaction is choline + A = betaine aldehyde + AH2. It catalyses the reaction betaine aldehyde + NAD(+) + H2O = glycine betaine + NADH + 2 H(+). It functions in the pathway amine and polyamine biosynthesis; betaine biosynthesis via choline pathway; betaine aldehyde from choline (cytochrome c reductase route): step 1/1. In terms of biological role, involved in the biosynthesis of the osmoprotectant glycine betaine. Catalyzes the oxidation of choline to betaine aldehyde and betaine aldehyde to glycine betaine at the same rate. The sequence is that of Oxygen-dependent choline dehydrogenase from Brucella canis (strain ATCC 23365 / NCTC 10854 / RM-666).